Consider the following 85-residue polypeptide: Small ribosomal subunit protein bS20 (85 aa).

The tract at residues 1–25 is disordered; that stretch reads MANIKSAIKRAKLSEERRAHNASIK.

It belongs to the bacterial ribosomal protein bS20 family.

Functionally, binds directly to 16S ribosomal RNA. The sequence is that of Small ribosomal subunit protein bS20 from Bacillus anthracis (strain A0248).